Reading from the N-terminus, the 449-residue chain is Exodeoxyribonuclease 7 large subunit (449 aa).

The protein belongs to the XseA family. Heterooligomer composed of large and small subunits.

The protein resides in the cytoplasm. It catalyses the reaction Exonucleolytic cleavage in either 5'- to 3'- or 3'- to 5'-direction to yield nucleoside 5'-phosphates.. Functionally, bidirectionally degrades single-stranded DNA into large acid-insoluble oligonucleotides, which are then degraded further into small acid-soluble oligonucleotides. This Lacticaseibacillus casei (strain BL23) (Lactobacillus casei) protein is Exodeoxyribonuclease 7 large subunit.